The primary structure comprises 123 residues: UPF0102 protein MCA0184 (123 aa).

This sequence belongs to the UPF0102 family.

In Methylococcus capsulatus (strain ATCC 33009 / NCIMB 11132 / Bath), this protein is UPF0102 protein MCA0184.